We begin with the raw amino-acid sequence, 270 residues long: Small ribosomal subunit protein uS3 (270 aa).

The region spanning 38-106 (IRQMLTRGME…QVQLNILEVK (69 aa)) is the KH type-2 domain. The tract at residues 212–270 (EREAAQAAQRAAGPQRRERPGRRRRGGGGGGGQQQQQAEKATAQATEAAKAAKSGNEGS) is disordered. Low complexity-rich tracts occupy residues 216-225 (AQAAQRAAGP) and 245-263 (QQQQ…AKAA).

This sequence belongs to the universal ribosomal protein uS3 family. As to quaternary structure, part of the 30S ribosomal subunit. Forms a tight complex with proteins S10 and S14.

In terms of biological role, binds the lower part of the 30S subunit head. Binds mRNA in the 70S ribosome, positioning it for translation. This Thermobifida fusca (strain YX) protein is Small ribosomal subunit protein uS3.